The primary structure comprises 678 residues: Dol-P-Man:Man(7)GlcNAc(2)-PP-Dol alpha-1,6-mannosyltransferase (678 aa).

A run of 11 helical transmembrane segments spans residues 1–21, 56–76, 81–101, 109–129, 133–153, 168–188, 200–220, 252–272, 279–299, 301–321, and 334–354; these read MDIL…FTKV, FIGP…FETL, FWAQ…AWNS, IYGV…FHFM, TRPL…AYWL, ILVF…VSLL, VALP…SFFW, FYSA…IGVA, PLVL…HKEL, FIIY…QRIW, and ALAC…LLVI.

The protein belongs to the glycosyltransferase 22 family.

The protein resides in the endoplasmic reticulum membrane. The catalysed reaction is an alpha-D-Man-(1-&gt;2)-alpha-D-Man-(1-&gt;2)-alpha-D-Man-(1-&gt;3)-[alpha-D-Man-(1-&gt;2)-alpha-D-Man-(1-&gt;3)-alpha-D-Man-(1-&gt;6)]-beta-D-Man-(1-&gt;4)-beta-D-GlcNAc-(1-&gt;4)-alpha-D-GlcNAc-diphospho-di-trans,poly-cis-dolichol + a di-trans,poly-cis-dolichyl beta-D-mannosyl phosphate = an alpha-D-Man-(1-&gt;2)-alpha-D-Man-(1-&gt;2)-alpha-D-Man-(1-&gt;3)-[alpha-D-Man-(1-&gt;2)-alpha-D-Man-(1-&gt;3)-[alpha-D-Man-(1-&gt;6)]-alpha-D-Man-(1-&gt;6)]-beta-D-Man-(1-&gt;4)-beta-D-GlcNAc-(1-&gt;4)-alpha-D-GlcNAc-diphospho-di-trans,poly-cis-dolichol + a di-trans,poly-cis-dolichyl phosphate + H(+). Its pathway is protein modification; protein glycosylation. Its function is as follows. Mannosyltransferase that operates in the biosynthetic pathway of dolichol-linked oligosaccharides, the glycan precursors employed in protein asparagine (N)-glycosylation. The assembly of dolichol-linked oligosaccharides begins on the cytosolic side of the endoplasmic reticulum membrane and finishes in its lumen. The sequential addition of sugars to dolichol pyrophosphate produces dolichol-linked oligosaccharides containing fourteen sugars, including two GlcNAcs, nine mannoses and three glucoses. Once assembled, the oligosaccharide is transferred from the lipid to nascent proteins by oligosaccharyltransferases. In the lumen of the endoplasmic reticulum, adds the eighth mannose residue in an alpha-1,6 linkage onto Man(7)GlcNAc(2)-PP-dolichol to produce Man(8)GlcNAc(2)-PP-dolichol. This Drosophila melanogaster (Fruit fly) protein is Dol-P-Man:Man(7)GlcNAc(2)-PP-Dol alpha-1,6-mannosyltransferase.